A 586-amino-acid chain; its full sequence is Septin-9 (586 aa).

M1 bears the N-acetylmethionine mark. Low complexity predominate over residues 1 to 14 (MKKSYSGGTRTSSG). Disordered stretches follow at residues 1-49 (MKKS…RVQT), 62-108 (KFQD…SRRT), and 134-268 (RAEV…PASR). Phosphoserine occurs at positions 22 and 30. T38, T42, and T49 each carry phosphothreonine. K62 is modified (N6-acetyllysine). S82, S85, S89, and S96 each carry phosphoserine. Residues 134 to 151 (RAEVLGHKTPEPAPRRTE) are compositionally biased toward basic and acidic residues. T142 carries the phosphothreonine modification. A Phosphotyrosine modification is found at Y278. One can recognise a Septin-type G domain in the interval 295 to 567 (QGFEFNIMVV…EAYRVKRLNE (273 aa)). Residues 305–312 (GQSGLGKS) are G1 motif. 305–312 (GQSGLGKS) contributes to the GTP binding site. Residues S327 and S332 each carry the phosphoserine modification. GTP is bound by residues T339, G365, 445 to 453 (KADTLTLEE), G501, and R516. A G3 motif region spans residues 362 to 365 (DTPG). A G4 motif region spans residues 444 to 447 (AKAD).

It belongs to the TRAFAC class TrmE-Era-EngA-EngB-Septin-like GTPase superfamily. Septin GTPase family. In terms of assembly, septins polymerize into heterooligomeric protein complexes that form filaments, and associate with cellular membranes, actin filaments, and microtubules. GTPase activity is required for filament formation. Interacts with SEPTIN2, SEPTIN6, SEPTIN7, SEPTIN11 and SEPTIN14. Interacts with RTKN and ARHGEF18. In a mesenchymal cell line, Rho/RTKN signals cause disruption of wild-type septin filaments, but not of those containing isoform 2 variants HNA Trp-106 and Phe-111. In a mesenchymal cell line, isoform 2 variants HNA Trp-106 and Phe-111, but not wild type, form filaments with SEPTIN4. As to expression, widely expressed. Isoforms are differentially expressed in testes, kidney, liver heart, spleen, brain, peripheral blood leukocytes, skeletal muscle and kidney. Specific isoforms appear to demonstrate tissue specificity. Isoform 5 is the most highly expressed in fetal tissue. Isoform 1 is detected in all tissues except the brain and thymus, while isoform 2, isoform 3, and isoform 4 are detected at low levels in approximately half of the fetal tissues.

Its subcellular location is the cytoplasm. The protein resides in the cytoskeleton. Its function is as follows. Filament-forming cytoskeletal GTPase. May play a role in cytokinesis (Potential). May play a role in the internalization of 2 intracellular microbial pathogens, Listeria monocytogenes and Shigella flexneri. This Homo sapiens (Human) protein is Septin-9.